Consider the following 160-residue polypeptide: S-ribosylhomocysteine lyase (160 aa).

Fe cation contacts are provided by His-57, His-61, and Cys-127.

The protein belongs to the LuxS family. As to quaternary structure, homodimer. Fe cation is required as a cofactor.

It catalyses the reaction S-(5-deoxy-D-ribos-5-yl)-L-homocysteine = (S)-4,5-dihydroxypentane-2,3-dione + L-homocysteine. Involved in the synthesis of autoinducer 2 (AI-2) which is secreted by bacteria and is used to communicate both the cell density and the metabolic potential of the environment. The regulation of gene expression in response to changes in cell density is called quorum sensing. Catalyzes the transformation of S-ribosylhomocysteine (RHC) to homocysteine (HC) and 4,5-dihydroxy-2,3-pentadione (DPD). This is S-ribosylhomocysteine lyase from Streptococcus pyogenes serotype M2 (strain MGAS10270).